The following is a 267-amino-acid chain: Undecaprenyl-diphosphatase (267 aa).

Transmembrane regions (helical) follow at residues 1–21, 39–59, 83–103, 111–131, 149–169, 189–209, 218–238, and 246–266; these read MTYF…FLPI, QGLA…VIYF, SNLA…GLLF, LRSA…LWWV, ALFL…RSGI, FLMS…KLAM, LLST…HFFL, and MMPF…WLAL.

Belongs to the UppP family.

It is found in the cell inner membrane. It catalyses the reaction di-trans,octa-cis-undecaprenyl diphosphate + H2O = di-trans,octa-cis-undecaprenyl phosphate + phosphate + H(+). Catalyzes the dephosphorylation of undecaprenyl diphosphate (UPP). Confers resistance to bacitracin. In Aliivibrio fischeri (strain MJ11) (Vibrio fischeri), this protein is Undecaprenyl-diphosphatase.